The chain runs to 258 residues: Alpha- and beta-fibrinogenase stejnefibrase-1 (258 aa).

An N-terminal signal peptide occupies residues 1 to 18; the sequence is MELIRVLANLLILQLSYA. A propeptide spanning residues 19 to 24 is cleaved from the precursor; sequence QKSSEL. One can recognise a Peptidase S1 domain in the interval 25-249; sequence IIGGDECNID…HLDWIQNIIA (225 aa). 6 disulfides stabilise this stretch: C31–C163, C50–C66, C98–C256, C142–C210, C174–C189, and C200–C225. H65 serves as the catalytic Charge relay system. A glycan (N-linked (GlcNAc...) asparagine) is linked at N103. The active-site Charge relay system is D110. Residues N121, N122, N154, and N170 are each glycosylated (N-linked (GlcNAc...) asparagine). S204 acts as the Charge relay system in catalysis.

This sequence belongs to the peptidase S1 family. Snake venom subfamily. In terms of assembly, monomer. Expressed by the venom gland.

The protein localises to the secreted. Its activity is regulated as follows. Its activity is inhibited by PMSF and p-nitrophenyl-p-guanidinobenzoate (NPGB). Functionally, snake venom serine protease. Degrades concomitantly alpha- (FGA) and beta-chains of fibrinogen (FGB). The sequence is that of Alpha- and beta-fibrinogenase stejnefibrase-1 from Trimeresurus stejnegeri (Chinese green tree viper).